The chain runs to 158 residues: 6,7-dimethyl-8-ribityllumazine synthase (158 aa).

5-amino-6-(D-ribitylamino)uracil is bound by residues Phe-22, 57–59, and 81–83; these read AVE and AVI. 86-87 lines the (2S)-2-hydroxy-3-oxobutyl phosphate pocket; that stretch reads GT. His-89 (proton donor) is an active-site residue. Position 114 (Phe-114) interacts with 5-amino-6-(D-ribitylamino)uracil. A (2S)-2-hydroxy-3-oxobutyl phosphate-binding site is contributed by Arg-128.

It belongs to the DMRL synthase family. Forms an icosahedral capsid composed of 60 subunits, arranged as a dodecamer of pentamers.

The enzyme catalyses (2S)-2-hydroxy-3-oxobutyl phosphate + 5-amino-6-(D-ribitylamino)uracil = 6,7-dimethyl-8-(1-D-ribityl)lumazine + phosphate + 2 H2O + H(+). It participates in cofactor biosynthesis; riboflavin biosynthesis; riboflavin from 2-hydroxy-3-oxobutyl phosphate and 5-amino-6-(D-ribitylamino)uracil: step 1/2. Functionally, catalyzes the formation of 6,7-dimethyl-8-ribityllumazine by condensation of 5-amino-6-(D-ribitylamino)uracil with 3,4-dihydroxy-2-butanone 4-phosphate. This is the penultimate step in the biosynthesis of riboflavin. The sequence is that of 6,7-dimethyl-8-ribityllumazine synthase from Shewanella loihica (strain ATCC BAA-1088 / PV-4).